We begin with the raw amino-acid sequence, 541 residues long: GPI alpha-1,2-mannosyltransferase 3 (541 aa).

Asn-18 carries N-linked (GlcNAc...) asparagine glycosylation. A run of 9 helical transmembrane segments spans residues 53 to 73, 126 to 146, 182 to 202, 214 to 234, 245 to 265, 305 to 325, 330 to 350, 352 to 372, and 377 to 397; these read LVLFIIALRICNCFLVQTSFV, VHLLIWIPRLAQALLSAIADL, LTNTMETVLTIIALFYYPLEG, LVALAFIIRPTAVIPWIPLLF, DLILHQFLPVGFVTLSLSLII, GFPAVLGTHLPFFIHGCFLAP, IFLVTVLWTLLVYSMLSHKEF, FIYPVLPFCMVFCGYSLNNLK, and PALSFLFLSNMLLALYTGLVH. Asn-417 is a glycosylation site (N-linked (GlcNAc...) asparagine).

Belongs to the glycosyltransferase 22 family. PIGB subfamily.

It localises to the endoplasmic reticulum membrane. Its pathway is glycolipid biosynthesis; glycosylphosphatidylinositol-anchor biosynthesis. In terms of biological role, alpha-1,2-mannosyltransferase that catalyzes the transfer of the third mannose, via an alpha-1,2 bond, from a dolichol-phosphate-mannose (Dol-P-Man) to an alpha-D-Man-(1-&gt;6)-2-PEtn-alpha-D-Man-(1-&gt;4)-alpha-D-GlcN-(1-&gt;6)-(1-radyl,2-acyl-sn-glycero-3-phospho)-2-acyl-inositol intermediate to generate an alpha-D-Man-(1-&gt;2)-alpha-D-Man-(1-&gt;6)-2-PEtn-alpha-D-Man-(1-&gt;4)-alpha-D-GlcN-(1-&gt;6)-(1-radyl,2-acyl-sn-glycero-3-phospho)-2-acyl-inositol (also termed H6) and participates in the nineth step of the glycosylphosphatidylinositol-anchor biosynthesis. May also add the third mannose to an alpha-D-Man-(1-&gt;6)-alpha-D-Man-(1-&gt;4)-alpha-D-GlcN-(1-&gt;6)-(1-radyl,2-acyl-sn-glycero-3-phospho)-2-acyl-inositol (also termed H3) intermediate generating an alpha-D-Man-(1-&gt;2)-alpha-D-Man-(1-&gt;6)-alpha-D-Man-(1-&gt;4)-alpha-D-GlcN-(1-&gt;6)-(1-radyl,2-acyl-sn-glycero-3-phospho)-2-acyl-inositol (also termed H4). The polypeptide is GPI alpha-1,2-mannosyltransferase 3 (Bos taurus (Bovine)).